Reading from the N-terminus, the 711-residue chain is Putative membrane protein ActII-3 (711 aa).

12 helical membrane passes run 14–34, 175–195, 199–219, 235–255, 281–301, 313–333, 369–389, 516–536, 540–560, 573–593, 623–643, and 645–665; these read LKWLVLAAWIGLLIVLQPLAG, ADFKLTLVTLLIVVTILVVTY, LLWLLPMISAGMSLVISQAIV, AMILTVLVLGAATDYALLLVA, AIVASAATVAVSMLVLLLAAL, VGVLVGLLSMMTLLPALLVIF, AVWVTTSLLLGAVATLAVTLN, IIPVILAVVFCILALLLRALV, LLIASVVLSFFTALGLAALFF, FPLWVFVFLVALGVDYNIFLV, AGLVLAGTFAALATLPLVFIA, and LGFTVAVGVLLDTMIVRSVLV. The tract at residues 685 to 711 is disordered; the sequence is REDPSEDPAVSGMPDSIDSEASTTASR.

This sequence belongs to the resistance-nodulation-cell division (RND) (TC 2.A.6) family. MmpL subfamily.

It is found in the cell membrane. The sequence is that of Putative membrane protein ActII-3 (actII-3) from Streptomyces coelicolor (strain ATCC BAA-471 / A3(2) / M145).